Reading from the N-terminus, the 201-residue chain is Adenylyl-sulfate kinase (201 aa).

35–42 lines the ATP pocket; the sequence is GLSGSGKS. Serine 109 acts as the Phosphoserine intermediate in catalysis.

Belongs to the APS kinase family.

The catalysed reaction is adenosine 5'-phosphosulfate + ATP = 3'-phosphoadenylyl sulfate + ADP + H(+). It functions in the pathway sulfur metabolism; hydrogen sulfide biosynthesis; sulfite from sulfate: step 2/3. Functionally, catalyzes the synthesis of activated sulfate. This is Adenylyl-sulfate kinase from Klebsiella pneumoniae (strain 342).